The primary structure comprises 203 residues: UDP-N-acetylglucosamine transferase subunit ALG13 (203 aa).

It belongs to the glycosyltransferase 28 family. In terms of assembly, heterodimer with ALG14 to form a functional enzyme.

Its subcellular location is the endoplasmic reticulum. It carries out the reaction an N-acetyl-alpha-D-glucosaminyl-diphospho-di-trans,poly-cis-dolichol + UDP-N-acetyl-alpha-D-glucosamine = an N,N'-diacetylchitobiosyl-diphospho-di-trans,poly-cis-dolichol + UDP + H(+). Involved in protein N-glycosylation. Essential for the second step of the dolichol-linked oligosaccharide pathway. This Eremothecium gossypii (strain ATCC 10895 / CBS 109.51 / FGSC 9923 / NRRL Y-1056) (Yeast) protein is UDP-N-acetylglucosamine transferase subunit ALG13 (ALG13).